A 762-amino-acid polypeptide reads, in one-letter code: ABC-type oligopeptide transporter ABCB9 (762 aa).

Transmembrane regions (helical) follow at residues 7–27 (VVVT…IYAF), 47–67 (VLDL…ATIG), 84–104 (LVIT…LLLF), 116–136 (FWAL…LWGL), 181–201 (VAFL…ETFL), 221–241 (FTTA…AAGI), 315–335 (VFMF…FPII), and 412–432 (SGLT…HLVI). Residues 184 to 467 (LVAASFFLIV…VGSVYSGLMQ (284 aa)) form the ABC transmembrane type-1 domain. Positions 500–736 (VDFENVTFTY…GGLYAKLVQR (237 aa)) constitute an ABC transporter domain. 535–542 (GPSGSGKS) contacts ATP.

The protein belongs to the ABC transporter superfamily. ABCB family. MHC peptide exporter (TC 3.A.1.209) subfamily. In terms of assembly, homodimer. Interacts (via TMD0 region) with LAMP1; this interaction strongly stabilizes ABCB9 and protects ABCB9 against lysosomal degradation. Interacts (via TMD0 region) with LAMP2 (isoform LAMP-2B). Interacts (via TMD0) with YIF1B; this interaction allows (but is not essential) the ER-to-Golgi trafficking and strongly depends on a salt bridge within TMD0. Found in testis, particularly in the Sertoli cells of the seminiferous tubules. Also expressed in kidney, brain, heart, lung, spleen, thymus, intestine and testis. Higher expression detected in brain and testis than in thymus and intestine.

The protein resides in the lysosome membrane. The catalysed reaction is a [oligopeptide](in) + ATP + H2O = a [oligopeptide](out) + ADP + phosphate + H(+). Functionally, ATP-dependent low-affinity peptide transporter which translocates a broad spectrum of peptides from the cytosol to the lysosomal lumen for degradation. Displays a broad peptide length specificity from 6-mer up to at least 59-mer peptides with an optimum of 23-mers. Binds and transports smaller and larger peptides with the same affinity. Favors positively charged, aromatic or hydrophobic residues in the N- and C-terminal positions whereas negatively charged residues as well as asparagine and methionine are not favored. The protein is ABC-type oligopeptide transporter ABCB9 of Rattus norvegicus (Rat).